The primary structure comprises 290 residues: 33 kDa chaperonin (290 aa).

Cystine bridges form between C235/C237 and C268/C271.

Belongs to the HSP33 family. In terms of processing, under oxidizing conditions two disulfide bonds are formed involving the reactive cysteines. Under reducing conditions zinc is bound to the reactive cysteines and the protein is inactive.

It is found in the cytoplasm. Functionally, redox regulated molecular chaperone. Protects both thermally unfolding and oxidatively damaged proteins from irreversible aggregation. Plays an important role in the bacterial defense system toward oxidative stress. The sequence is that of 33 kDa chaperonin from Streptococcus pyogenes serotype M12 (strain MGAS2096).